The chain runs to 1182 residues: Exocyst complex component 4 (1182 aa).

Positions 236–250 are enriched in low complexity; that stretch reads NKNSNSNNSNNTFKS. 4 disordered regions span residues 236–262, 376–427, 525–545, and 921–968; these read NKNS…PFKP, IPKM…SSNI, EETE…PKPT, and QQQQ…GSNN. A compositionally biased stretch (gly residues) spans 392–409; sequence GSNGGGNNSMNGSGGING. The segment covering 410–426 has biased composition (low complexity); that stretch reads NGSTASSSSPTSSTSSN. The span at 921–932 shows a compositional bias: low complexity; the sequence is QQQQQQQQQQQQ. A compositionally biased stretch (polar residues) spans 933–968; it reads VDSIKTPSKLNSGINSGGNSTASNKENNSTTTGSNN.

Belongs to the SEC8 family. As to quaternary structure, the exocyst complex is composed of sec3/exoc1, sec5/exoc2, sec6/exoc3, sec8/exoc4, sec10/exoc5, sec15/exoc6, exo70/exoc7 and exo84/exoc8.

It is found in the midbody. The protein localises to the midbody ring. Its subcellular location is the cell projection. It localises to the cytoplasm. The protein resides in the cytoskeleton. It is found in the microtubule organizing center. The protein localises to the centrosome. Its function is as follows. Component of the exocyst complex involved in the docking of exocytic vesicles with fusion sites on the plasma membrane. The chain is Exocyst complex component 4 (exoc4) from Dictyostelium discoideum (Social amoeba).